The primary structure comprises 252 residues: Coenzyme F420:L-glutamate ligase (252 aa).

GTP is bound by residues 12-15 (VPLE), 44-45 (HT), and lysine 49. Aspartate 114 contacts a divalent metal cation. GTP is bound at residue asparagine 117. Positions 155, 156, and 213 each coordinate a divalent metal cation. 211-218 (MGQADEGT) is a GTP binding site.

The protein belongs to the CofE family. In terms of assembly, homodimer. Mg(2+) serves as cofactor. It depends on Mn(2+) as a cofactor. The cofactor is K(+).

It catalyses the reaction oxidized coenzyme F420-0 + GTP + L-glutamate = oxidized coenzyme F420-1 + GDP + phosphate + H(+). The catalysed reaction is oxidized coenzyme F420-1 + GTP + L-glutamate = oxidized coenzyme F420-2 + GDP + phosphate + H(+). Its pathway is cofactor biosynthesis; coenzyme F420 biosynthesis. Functionally, catalyzes the GTP-dependent successive addition of two or more gamma-linked L-glutamates to the L-lactyl phosphodiester of 7,8-didemethyl-8-hydroxy-5-deazariboflavin (F420-0) to form coenzyme F420-0-glutamyl-glutamate (F420-2) or polyglutamated F420 derivatives. In Methanopyrus kandleri (strain AV19 / DSM 6324 / JCM 9639 / NBRC 100938), this protein is Coenzyme F420:L-glutamate ligase.